A 559-amino-acid chain; its full sequence is Urocanate hydratase (559 aa).

Residues 54–55 (GG), Gln132, 178–180 (GMG), Glu198, Arg203, 244–245 (NA), 265–269 (QTSAH), 275–276 (YL), and Tyr324 contribute to the NAD(+) site. The active site involves Cys412. An NAD(+)-binding site is contributed by Gly494.

This sequence belongs to the urocanase family. NAD(+) is required as a cofactor.

Its subcellular location is the cytoplasm. It carries out the reaction 4-imidazolone-5-propanoate = trans-urocanate + H2O. Its pathway is amino-acid degradation; L-histidine degradation into L-glutamate; N-formimidoyl-L-glutamate from L-histidine: step 2/3. Its function is as follows. Catalyzes the conversion of urocanate to 4-imidazolone-5-propionate. This is Urocanate hydratase from Photorhabdus laumondii subsp. laumondii (strain DSM 15139 / CIP 105565 / TT01) (Photorhabdus luminescens subsp. laumondii).